The following is a 110-amino-acid chain: Phosphoribosyl-ATP pyrophosphatase (110 aa).

This sequence belongs to the PRA-PH family.

Its subcellular location is the cytoplasm. The enzyme catalyses 1-(5-phospho-beta-D-ribosyl)-ATP + H2O = 1-(5-phospho-beta-D-ribosyl)-5'-AMP + diphosphate + H(+). Its pathway is amino-acid biosynthesis; L-histidine biosynthesis; L-histidine from 5-phospho-alpha-D-ribose 1-diphosphate: step 2/9. The protein is Phosphoribosyl-ATP pyrophosphatase of Pseudomonas syringae pv. tomato (strain ATCC BAA-871 / DC3000).